Consider the following 211-residue polypeptide: Arginine exporter protein ArgO (211 aa).

Helical transmembrane passes span 1–21 (MISYYFQGFALGAAMILPLGP), 37–57 (LMIALLCALSDLVLISAGIFG), 68–88 (LLALVTWGGVAFLLWYGFGAL), 111–131 (IIATMLAVTWLNPHVYLDTFV), 147–167 (WFALGTISASFLWFFGLALLA), and 179–199 (AQRIINILVGVVMWLIAFQLA).

Belongs to the LysE/ArgO transporter (TC 2.A.75) family.

The protein resides in the cell inner membrane. The catalysed reaction is L-arginine(in) = L-arginine(out). In terms of biological role, involved in the export of arginine. Important to control the intracellular level of arginine and the correct balance between arginine and lysine. This chain is Arginine exporter protein ArgO, found in Salmonella newport (strain SL254).